We begin with the raw amino-acid sequence, 384 residues long: Formate-dependent phosphoribosylglycinamide formyltransferase (384 aa).

N(1)-(5-phospho-beta-D-ribosyl)glycinamide is bound by residues 14–15 and Glu74; that span reads EL. ATP-binding positions include Arg106, Lys147, 152 to 157, 187 to 190, and Glu195; these read SSGKGQ and EEFI. Residues 111–300 enclose the ATP-grasp domain; sequence RLAAETLHLP…EFALHVRAVL (190 aa). 2 residues coordinate Mg(2+): Glu259 and Glu271. Residues Asp278, Lys348, and 355–356 contribute to the N(1)-(5-phospho-beta-D-ribosyl)glycinamide site; that span reads RR.

It belongs to the PurK/PurT family. In terms of assembly, homodimer.

The enzyme catalyses N(1)-(5-phospho-beta-D-ribosyl)glycinamide + formate + ATP = N(2)-formyl-N(1)-(5-phospho-beta-D-ribosyl)glycinamide + ADP + phosphate + H(+). It functions in the pathway purine metabolism; IMP biosynthesis via de novo pathway; N(2)-formyl-N(1)-(5-phospho-D-ribosyl)glycinamide from N(1)-(5-phospho-D-ribosyl)glycinamide (formate route): step 1/1. Its function is as follows. Involved in the de novo purine biosynthesis. Catalyzes the transfer of formate to 5-phospho-ribosyl-glycinamide (GAR), producing 5-phospho-ribosyl-N-formylglycinamide (FGAR). Formate is provided by PurU via hydrolysis of 10-formyl-tetrahydrofolate. The sequence is that of Formate-dependent phosphoribosylglycinamide formyltransferase from Bacillus velezensis (strain DSM 23117 / BGSC 10A6 / LMG 26770 / FZB42) (Bacillus amyloliquefaciens subsp. plantarum).